Here is a 607-residue protein sequence, read N- to C-terminus: UvrABC system protein C (607 aa).

The GIY-YIG domain maps to Gly16 to Ile94. Residues Gln203 to Val238 form the UVR domain.

Belongs to the UvrC family. In terms of assembly, interacts with UvrB in an incision complex.

It is found in the cytoplasm. In terms of biological role, the UvrABC repair system catalyzes the recognition and processing of DNA lesions. UvrC both incises the 5' and 3' sides of the lesion. The N-terminal half is responsible for the 3' incision and the C-terminal half is responsible for the 5' incision. The chain is UvrABC system protein C from Pseudomonas entomophila (strain L48).